A 586-amino-acid polypeptide reads, in one-letter code: Ferredoxin--nitrite reductase, chloroplastic (586 aa).

Residues M1 to T18 are compositionally biased toward low complexity. The interval M1 to P20 is disordered. The N-terminal 25 residues, M1–L25, are a transit peptide targeting the chloroplast. K103 is covalently cross-linked (Glycyl lysine isopeptide (Lys-Gly) (interchain with G-Cter in ubiquitin)). [4Fe-4S] cluster-binding residues include C464, C470, C505, and C509. C509 contributes to the siroheme binding site.

Belongs to the nitrite and sulfite reductase 4Fe-4S domain family. Monomer. Siroheme serves as cofactor. Requires [4Fe-4S] cluster as cofactor.

The protein localises to the plastid. The protein resides in the chloroplast. The enzyme catalyses 6 oxidized [2Fe-2S]-[ferredoxin] + NH4(+) + 2 H2O = nitrite + 6 reduced [2Fe-2S]-[ferredoxin] + 8 H(+). The protein operates within nitrogen metabolism; nitrate reduction (assimilation). Catalyzes the six-electron reduction of nitrite to ammonium. The protein is Ferredoxin--nitrite reductase, chloroplastic (NIR1) of Arabidopsis thaliana (Mouse-ear cress).